The chain runs to 594 residues: Golgi-associated RAB2 interactor protein 4 (594 aa).

The interval 387-524 is disordered; the sequence is MDAAAGPPVS…TSSGSSKGLG (138 aa). The span at 396 to 406 shows a compositional bias: polar residues; the sequence is STRQSKSSLSG. Basic and acidic residues-rich tracts occupy residues 408–433, 442–455, and 468–477; these read HGRE…DRAL, TGES…DKIA, and ANRDDKKEKG. Over residues 511–520 the composition is skewed to polar residues; that stretch reads SLWTTSSGSS.

This sequence belongs to the GARIN family. As to quaternary structure, interacts (via N-terminus) with RAB2B (in GTP-bound form).

It localises to the golgi apparatus. Functionally, RAB2B effector protein required for the compacted Golgi morphology, probably through interaction with small GTPase RAB2B. The protein is Golgi-associated RAB2 interactor protein 4 of Homo sapiens (Human).